The following is a 768-amino-acid chain: Photosystem I P700 chlorophyll a apoprotein A1 (768 aa).

8 helical membrane-spanning segments follow: residues 76–99 (VFSAHFGHLAVIFIWMSAAFFHGA), 162–185 (LMALAIGALLMAAIMLHGGIYHYH), 201–225 (LNHHIAGLVGLGSIAWAGHCIHIGA), 310–328 (ISHHHLAFGVLAVLGGHLY), 369–392 (WHAQLGLNLAMIGSLSIIISHHMY), 408–434 (LGLFTHHMWIGGLFIVGAAAHAGIAMI), 456–478 (ALISHLNWACMFLGFHSFGLYIH), and 559–577 (FMIHHIHAFTIHVTLLILL). C601 and C610 together coordinate [4Fe-4S] cluster. The next 2 helical transmembrane spans lie at 617–638 (HVFLGLFWMYNGLSVVIFHFSW) and 682–704 (ISMYGLMFLGAHFVWAFSLMFLF). Divinylchlorophyll a' is bound at residue H693. Divinyl chlorophyll a is bound by residues M701 and Y709. Residue W710 coordinates phylloquinone. A helical transmembrane segment spans residues 742 to 762 (AVGAAHFLLGGIATTWAFFHA).

This sequence belongs to the PsaA/PsaB family. In terms of assembly, the PsaA/B heterodimer binds the P700 divinyl chlorophyll special pair and subsequent electron acceptors. PSI consists of a core antenna complex that captures photons, and an electron transfer chain that converts photonic excitation into a charge separation. The cyanobacterial PSI reaction center is composed of one copy each of PsaA,B,C,D,E,F,I,J,K,L,M and X, and forms trimeric complexes. Requires PSI electron transfer chain: 5 divinyl chlorophyll a, 1 divinyl chlorophyll a', 2 phylloquinones and 3 4Fe-4S clusters. PSI core antenna: 90 divinyl chlorophyll a, 22 carotenoids, 3 phospholipids and 1 galactolipid. P700 is a divinyl chlorophyll a/divinyl chlorophyll a' dimer, A0 is one or more divinyl chlorophyll a, A1 is one or both phylloquinones and FX is a shared 4Fe-4S iron-sulfur center. as cofactor.

It is found in the cellular thylakoid membrane. It carries out the reaction reduced [plastocyanin] + hnu + oxidized [2Fe-2S]-[ferredoxin] = oxidized [plastocyanin] + reduced [2Fe-2S]-[ferredoxin]. PsaA and PsaB bind P700, the primary electron donor of photosystem I (PSI), as well as the electron acceptors A0, A1 and FX. PSI is a plastocyanin/cytochrome c6-ferredoxin oxidoreductase, converting photonic excitation into a charge separation, which transfers an electron from the donor P700 chlorophyll pair to the spectroscopically characterized acceptors A0, A1, FX, FA and FB in turn. Oxidized P700 is reduced on the lumenal side of the thylakoid membrane by plastocyanin or cytochrome c6. The chain is Photosystem I P700 chlorophyll a apoprotein A1 from Prochlorococcus marinus (strain NATL1A).